We begin with the raw amino-acid sequence, 233 residues long: Bcl-2-like protein 1 (233 aa).

The BH4 signature appears at 4 to 24; it reads SNRELVVDFLSYKLSQKGYSW. Residues 27-73 are disordered; it reads FSDVEENRTEAPEETEAERETPSAINGNPSWHLADSPAVNGATGHSS. Residue Ser-49 is modified to Phosphoserine; by PLK3. Ser-62 is modified (phosphoserine; by CDK1). The BH3 signature appears at 86 to 100; it reads VKQALREAGDEFELR. The short motif at 129 to 148 is the BH1 element; sequence ELFRDGVNWGRIVAFFSFGG. Residues 180-195 carry the BH2 motif; the sequence is PWIQENGGWDTFVDLY. The helical transmembrane segment at 210-226 threads the bilayer; sequence FNRWFLTGMTVAGVVLL.

This sequence belongs to the Bcl-2 family. Homodimer. Interacts with BAD. Interacts with PGAM5. Interacts with HEBP2. Interacts with p53/TP53 and BBC3; interaction with BBC3 disrupts the interaction with p53/TP53. Interacts with ATP5F1A and ATP5F1B; the interactions mediate the association of isoform Bcl-X(L) with the mitochondrial membrane ATP synthase F(1)F(0) ATP synthase. Interacts with VDAC1. Interacts with BCL2L11 (via BH3). Interacts with RNF183. Interacts with GIMAP3/IAN4 and GIMAP5/IAN5. Interacts with GIMAP5 and HSPA8/HSC70; the interaction between HSPA8 and BCL2L1 is impaired in the absence of GIMAP5. Interacts with isoform 4 of CLU; this interaction releases and activates BAX and promotes cell death. As to quaternary structure, forms heterodimers with BAX, BAK or BCL2; heterodimerization with BAX does not seem to be required for anti-apoptotic activity. Interacts with isoform 1 of SIVA1; the interaction inhibits the anti-apoptotic activity. Interacts with IKZF3. Interacts with RTL10/BOP. Interacts with DNM1L and CLTA; DNM1L and BCL2L1 isoform BCL-X(L) may form a complex in synaptic vesicles that also contains clathrin and MFF. Interacts (via the loop between motifs BH4 and BH3) with NLRP1 (via LRR repeats), but not with NLRP2, NLRP3, NLRP4, PYCARD, nor MEFV. Interacts with BECN1. In terms of processing, proteolytically cleaved by caspases during apoptosis. The cleaved protein, lacking the BH4 motif, has pro-apoptotic activity. Phosphorylated on Ser-62 by CDK1. This phosphorylation is partial in normal mitotic cells, but complete in G2-arrested cells upon DNA-damage, thus promoting subsequent apoptosis probably by triggering caspases-mediated proteolysis. Phosphorylated by PLK3, leading to regulate the G2 checkpoint and progression to cytokinesis during mitosis. Phosphorylation at Ser-49 appears during the S phase and G2, disappears rapidly in early mitosis during prometaphase, metaphase and early anaphase, and re-appears during telophase and cytokinesis. Post-translationally, ubiquitinated by RNF183 during prolonged ER stress, leading to degradation by the proteosome. As to expression, widely expressed, with highest levels in the brain, thymus, bone marrow, and kidney. Bcl-X(L) and Bcl-X(delta-TM) expression is enhanced in B- and T-lymphocytes that have been activated.

It is found in the mitochondrion membrane. The protein resides in the nucleus membrane. Its subcellular location is the cytoplasm. The protein localises to the cytoskeleton. It localises to the microtubule organizing center. It is found in the centrosome. The protein resides in the mitochondrion inner membrane. Its subcellular location is the mitochondrion outer membrane. The protein localises to the mitochondrion matrix. It localises to the cytoplasmic vesicle. It is found in the secretory vesicle. The protein resides in the synaptic vesicle membrane. Its subcellular location is the cytosol. In terms of biological role, potent inhibitor of cell death. Inhibits activation of caspases. Appears to regulate cell death by blocking the voltage-dependent anion channel (VDAC) by binding to it and preventing the release of the caspase activator, CYC1, from the mitochondrial membrane. Also acts as a regulator of G2 checkpoint and progression to cytokinesis during mitosis. Its function is as follows. Isoform Bcl-X(L) also regulates presynaptic plasticity, including neurotransmitter release and recovery, number of axonal mitochondria as well as size and number of synaptic vesicle clusters. During synaptic stimulation, increases ATP availability from mitochondria through regulation of mitochondrial membrane ATP synthase F(1)F(0) activity and regulates endocytic vesicle retrieval in hippocampal neurons through association with DMN1L and stimulation of its GTPase activity in synaptic vesicles. May attenuate inflammation impairing NLRP1-inflammasome activation, hence CASP1 activation and IL1B release. Functionally, isoform Bcl-X(S) promotes apoptosis. In Mus musculus (Mouse), this protein is Bcl-2-like protein 1 (Bcl2l1).